A 349-amino-acid chain; its full sequence is MERLTRLNHFLVNMRWDFYEGVIQAGYIRNLQRELDHTPAELLGSKLDLIFFRESLNLSTYVNNWYMQNLGVPGPVNFIEKYHDACFSNYMKLMEIPSPLDQFEIVPLIPMHIGNFYFSFTNSSLFMLLTLSFFLLLIHFVTKKGGGNLVPNAWQSLVELLYDFVLNLVKEQIGGLSGNVKQMFFPCILVTFLFLLFCNLQGMIPYSFTVTSHFLITLALSFSIFIGITIVGFQRHGLHFFSFLLPAGVPLPLAPFLVLLELISYCFRALSLGIRLFANMMAGHSLVKILSGFAWTMLCMNDIFYFIGALGPLFIVLALTGLELGVAILQAYVFTILICIYLNDAINLH.

Positions 1–97 are excised as a propeptide; the sequence is MERLTRLNHF…SNYMKLMEIP (97 aa). 7 consecutive transmembrane segments (helical) span residues 118-138, 184-204, 213-233, 240-260, 280-300, 303-323, and 326-346; these read FSFT…LLLI, FFPC…QGMI, HFLI…IVGF, FFSF…LVLL, MMAG…MLCM, IFYF…TGLE, and VAIL…NDAI.

This sequence belongs to the ATPase A chain family. In terms of assembly, F-type ATPases have 2 components, CF(1) - the catalytic core - and CF(0) - the membrane proton channel. CF(1) has five subunits: alpha(3), beta(3), gamma(1), delta(1), epsilon(1). CF(0) has three main subunits: a, b and c.

Its subcellular location is the mitochondrion inner membrane. Its function is as follows. Mitochondrial membrane ATP synthase (F(1)F(0) ATP synthase or Complex V) produces ATP from ADP in the presence of a proton gradient across the membrane which is generated by electron transport complexes of the respiratory chain. F-type ATPases consist of two structural domains, F(1) - containing the extramembraneous catalytic core and F(0) - containing the membrane proton channel, linked together by a central stalk and a peripheral stalk. During catalysis, ATP synthesis in the catalytic domain of F(1) is coupled via a rotary mechanism of the central stalk subunits to proton translocation. Key component of the proton channel; it may play a direct role in the translocation of protons across the membrane. The chain is ATP synthase subunit a-2 (ATP6-2) from Arabidopsis thaliana (Mouse-ear cress).